The sequence spans 143 residues: Nucleoside diphosphate kinase (143 aa).

6 residues coordinate ATP: lysine 11, phenylalanine 59, arginine 87, threonine 93, arginine 104, and asparagine 114. Histidine 117 (pros-phosphohistidine intermediate) is an active-site residue.

It belongs to the NDK family. As to quaternary structure, homotetramer. The cofactor is Mg(2+).

The protein resides in the cytoplasm. The catalysed reaction is dZDP + ATP = dZTP + ADP. The enzyme catalyses a 2'-deoxyribonucleoside 5'-diphosphate + ATP = a 2'-deoxyribonucleoside 5'-triphosphate + ADP. It catalyses the reaction a ribonucleoside 5'-diphosphate + ATP = a ribonucleoside 5'-triphosphate + ADP. It participates in purine metabolism. In terms of biological role, major role in the synthesis of nucleoside triphosphates other than ATP. The ATP gamma phosphate is transferred to the NDP beta phosphate via a ping-pong mechanism, using a phosphorylated active-site intermediate. (Microbial infection) Catalyzes the phosphorylation of dZDP to dZTP, when the bacterium is infected by a phage that produces the substrate for the synthesis of dZTP (2- amino-2'-deoxyadenosine 5'-triphosphate), which is then used by the phage as a DNA polymerase substrate. The protein is Nucleoside diphosphate kinase of Acinetobacter baumannii (strain AB307-0294).